We begin with the raw amino-acid sequence, 458 residues long: Serine/threonine-protein kinase tricornered (458 aa).

In terms of domain architecture, Protein kinase spans 92-389 (FEALKVIGRG…LEDLKSVPFF (298 aa)). Residues 98 to 106 (IGRGAFGEV) and Lys-121 each bind ATP. Residues 118–179 (YAMKVLRKAD…EFLPGGDMMT (62 aa)) are interaction with mats and Mob1. Asp-215 serves as the catalytic Proton acceptor. The residue at position 287 (Ser-287) is a Phosphoserine. An AGC-kinase C-terminal domain is found at 390–458 (RGVDWEHIRE…YKRFEVRNLE (69 aa)). Thr-448 bears the Phosphothreonine mark.

This sequence belongs to the protein kinase superfamily. AGC Ser/Thr protein kinase family. Interacts with, and is activated by, Mob1. The cofactor is Mg(2+).

The protein resides in the cytoplasm. It localises to the nucleus. The catalysed reaction is L-seryl-[protein] + ATP = O-phospho-L-seryl-[protein] + ADP + H(+). It catalyses the reaction L-threonyl-[protein] + ATP = O-phospho-L-threonyl-[protein] + ADP + H(+). In terms of biological role, serine/threonine-protein kinase involved in controlling cell structure and proliferation of a variety of polarized outgrowths including epidermal hairs, bristles, arista laterals, and dendrites. Together with fry, maintains the integrity of epidermal hairs and is an essential component of the signaling pathway regulating dendritic branching of sensory neurons. Reduces neurite outgrowth by phosphorylating pav/pavarotti, thereby inhibiting its function in microtubule-microtubule sliding. The chain is Serine/threonine-protein kinase tricornered from Drosophila pseudoobscura pseudoobscura (Fruit fly).